The chain runs to 543 residues: Light-independent protochlorophyllide reductase subunit B (543 aa).

Aspartate 36 contacts [4Fe-4S] cluster. Residue aspartate 287 is the Proton donor of the active site. Residue 422 to 423 (GL) participates in substrate binding.

Belongs to the ChlB/BchB/BchZ family. In terms of assembly, protochlorophyllide reductase is composed of three subunits; BchL, BchN and BchB. Forms a heterotetramer of two BchB and two BchN subunits. Requires [4Fe-4S] cluster as cofactor.

The enzyme catalyses chlorophyllide a + oxidized 2[4Fe-4S]-[ferredoxin] + 2 ADP + 2 phosphate = protochlorophyllide a + reduced 2[4Fe-4S]-[ferredoxin] + 2 ATP + 2 H2O. It participates in porphyrin-containing compound metabolism; bacteriochlorophyll biosynthesis (light-independent). In terms of biological role, component of the dark-operative protochlorophyllide reductase (DPOR) that uses Mg-ATP and reduced ferredoxin to reduce ring D of protochlorophyllide (Pchlide) to form chlorophyllide a (Chlide). This reaction is light-independent. The NB-protein (BchN-BchB) is the catalytic component of the complex. This Rubrivivax gelatinosus (strain NBRC 100245 / IL144) protein is Light-independent protochlorophyllide reductase subunit B.